The chain runs to 546 residues: Choline oxidase (546 aa).

Residues 23 to 24 (SA), Glu44, Trp71, 90 to 92 (AKV), 96 to 103 (CSSHNSCI), Ala232, and Tyr465 contribute to the FAD site. The residue at position 99 (His99) is a Tele-8alpha-FAD histidine. Catalysis depends on His466, which acts as the Proton acceptor. FAD-binding positions include Ala500 and 510–512 (NPN).

It belongs to the GMC oxidoreductase family. As to quaternary structure, homodimer. The cofactor is FAD.

It catalyses the reaction choline + 2 O2 + H2O = glycine betaine + 2 H2O2 + H(+). It functions in the pathway amine and polyamine biosynthesis; betaine biosynthesis via choline pathway; betaine from choline: step 1/1. Catalyzes the two-step oxidative conversion of choline to glycine-betaine with betaine aldehyde as an intermediate. Glycine-betaine accumulates to high levels in the cytoplasm of cells to prevent dehydration and plasmolysis in adverse hyperosmotic environments. Accepts either choline or the reaction intermediate betaine-aldehyde as substrate. The chain is Choline oxidase (codA) from Arthrobacter globiformis.